The sequence spans 348 residues: Calcium-gated potassium channel TvoK (348 aa).

A run of 3 helical transmembrane segments spans residues L19–L39, Y52–V72, and V80–I100. In terms of domain architecture, RCK N-terminal spans K120 to S246. An RCK C-terminal domain is found at D266 to G348.

As to quaternary structure, heterooctamer composed of four full-length subunits and four soluble RCK domains.

It is found in the cell membrane. Calcium-gated potassium channel. Can also be activated by Mg(2+), Mn(2+) and Ni(2+). The sequence is that of Calcium-gated potassium channel TvoK from Thermoplasma volcanium (strain ATCC 51530 / DSM 4299 / JCM 9571 / NBRC 15438 / GSS1).